Reading from the N-terminus, the 425-residue chain is MSKIVVAGGTPLYGDVRISGAKNAVLPILCATLLADAPVEISNVPYLHDVITMINLLRELGAGVTMNEGIEAKGRSITVDPRWVRQRVVPYDLVKTMRASVLLLGPLLACYGAAEVALPGGCAIGSRPVDQHIRGLQSLGAEITVENGYIKASVSQGRLKGGRFVFDVVSVTGTENLLMAAAVAQGTSVIENAAMEPEVVDLAECLITLGARVEGAGTPRIVVEGVERLKSGQYAVLPDRIETGTFLVATAMTGGRISMQQVRPQTLDAVLGKLTEAGACIEIGADSIRLDMQGRRPCSVNLTTAPYPGFPTDMQAQFMALNCVAEGVGVIKETIFENRFMHVDELLRLGAKIQIEGHTAIVQGVERLSGAPVMATDLRASASLILAGLVAEGETIIDRIYHLDRGYENIEKKLGVLGASIRRMT.

Residue 22–23 (KN) coordinates phosphoenolpyruvate. UDP-N-acetyl-alpha-D-glucosamine is bound at residue arginine 98. Catalysis depends on cysteine 122, which acts as the Proton donor. Cysteine 122 is modified (2-(S-cysteinyl)pyruvic acid O-phosphothioketal). UDP-N-acetyl-alpha-D-glucosamine-binding positions include 127–131 (RPVDQ), aspartate 313, and isoleucine 335.

This sequence belongs to the EPSP synthase family. MurA subfamily.

The protein resides in the cytoplasm. The catalysed reaction is phosphoenolpyruvate + UDP-N-acetyl-alpha-D-glucosamine = UDP-N-acetyl-3-O-(1-carboxyvinyl)-alpha-D-glucosamine + phosphate. It participates in cell wall biogenesis; peptidoglycan biosynthesis. Cell wall formation. Adds enolpyruvyl to UDP-N-acetylglucosamine. The polypeptide is UDP-N-acetylglucosamine 1-carboxyvinyltransferase (Xylella fastidiosa (strain M12)).